The sequence spans 133 residues: Ribosome-binding factor A (133 aa).

Belongs to the RbfA family. In terms of assembly, monomer. Binds 30S ribosomal subunits, but not 50S ribosomal subunits or 70S ribosomes.

It localises to the cytoplasm. One of several proteins that assist in the late maturation steps of the functional core of the 30S ribosomal subunit. Associates with free 30S ribosomal subunits (but not with 30S subunits that are part of 70S ribosomes or polysomes). Required for efficient processing of 16S rRNA. May interact with the 5'-terminal helix region of 16S rRNA. This is Ribosome-binding factor A from Cronobacter sakazakii (strain ATCC BAA-894) (Enterobacter sakazakii).